Consider the following 347-residue polypeptide: MSLNLVKALKLHNEKIWDIDCYKGLLATASTDRRIKIVNIGDIGDGLVSDDGRLLDELDDSSHKKTVRSVAWRPHSTILAAGSFDSTVSIWAKDENDGDADGDGGVDDPSSFSMELLAVIEGHENEVKSVAWSKDGYFLATCSRDKSVWIWESDEMGEEYECISVLQEHSQDVKHVVWHPFKDILASSSYDDTIRIWKEYDDDWEAAAVLKGHEGTVWGSDFEKNVNTDIVRLCSGSDDTTVKIWRCVSNESIEEDWICEATLPNVHGKPVYSVSWSEDGLIASAGSDGMLVIYKENKDNVWEVVAKHEHSHSIYEINVVKWIKLNNGKSYLATAGDDGYVNIWAYN.

WD repeat units lie at residues 11–48 (LHNEKIWDIDCYKGLLATASTDRRIKIVNIGDIGDGLV), 62–101 (SHKKTVRSVAWRPHSTILAAGSFDSTVSIWAKDENDGDAD), 122–161 (GHENEVKSVAWSKDGYFLATCSRDKSVWIWESDEMGEEYE), 168–207 (EHSQDVKHVVWHPFKDILASSSYDDTIRIWKEYDDDWEAA), 212–255 (GHEG…SIEE), 266–304 (VHGKPVYSVSWSEDGLIASAGSDGMLVIYKENKDNVWEV), and 311–347 (SHSIYEINVVKWIKLNNGKSYLATAGDDGYVNIWAYN).

Belongs to the WD repeat CIA1 family. In terms of assembly, interacts with NAR1.

The protein resides in the cytoplasm. It is found in the nucleus. Essential component of the cytosolic iron-sulfur (Fe/S) protein assembly machinery. Required for the maturation of extramitochondrial Fe/S proteins. The sequence is that of Probable cytosolic iron-sulfur protein assembly protein 1 from Vanderwaltozyma polyspora (strain ATCC 22028 / DSM 70294 / BCRC 21397 / CBS 2163 / NBRC 10782 / NRRL Y-8283 / UCD 57-17) (Kluyveromyces polysporus).